A 236-amino-acid chain; its full sequence is Flagellar L-ring protein (236 aa).

Positions 1–16 (MRMQLTAVLAASLLAG) are cleaved as a signal peptide. C17 is lipidated: N-palmitoyl cysteine. C17 carries the S-diacylglycerol cysteine lipid modification.

This sequence belongs to the FlgH family. In terms of assembly, the basal body constitutes a major portion of the flagellar organelle and consists of four rings (L,P,S, and M) mounted on a central rod.

The protein resides in the cell outer membrane. Its subcellular location is the bacterial flagellum basal body. In terms of biological role, assembles around the rod to form the L-ring and probably protects the motor/basal body from shearing forces during rotation. The chain is Flagellar L-ring protein from Sinorhizobium fredii (strain NBRC 101917 / NGR234).